The following is a 231-amino-acid chain: 5'-methylthioadenosine/S-adenosylhomocysteine nucleosidase (231 aa).

E12 serves as the catalytic Proton acceptor. Substrate is bound by residues G78, M153, and 174-175; that span reads ME. The active-site Proton donor is D198.

The protein belongs to the PNP/UDP phosphorylase family. MtnN subfamily.

It carries out the reaction S-adenosyl-L-homocysteine + H2O = S-(5-deoxy-D-ribos-5-yl)-L-homocysteine + adenine. The enzyme catalyses S-methyl-5'-thioadenosine + H2O = 5-(methylsulfanyl)-D-ribose + adenine. It catalyses the reaction 5'-deoxyadenosine + H2O = 5-deoxy-D-ribose + adenine. Its pathway is amino-acid biosynthesis; L-methionine biosynthesis via salvage pathway; S-methyl-5-thio-alpha-D-ribose 1-phosphate from S-methyl-5'-thioadenosine (hydrolase route): step 1/2. Its function is as follows. Catalyzes the irreversible cleavage of the glycosidic bond in both 5'-methylthioadenosine (MTA) and S-adenosylhomocysteine (SAH/AdoHcy) to adenine and the corresponding thioribose, 5'-methylthioribose and S-ribosylhomocysteine, respectively. Also cleaves 5'-deoxyadenosine, a toxic by-product of radical S-adenosylmethionine (SAM) enzymes, into 5-deoxyribose and adenine. The sequence is that of 5'-methylthioadenosine/S-adenosylhomocysteine nucleosidase from Psychromonas ingrahamii (strain DSM 17664 / CCUG 51855 / 37).